A 136-amino-acid polypeptide reads, in one-letter code: Large ribosomal subunit protein bL20c (136 aa).

Belongs to the bacterial ribosomal protein bL20 family.

The protein localises to the plastid. The protein resides in the chloroplast. In terms of biological role, binds directly to 23S ribosomal RNA and is necessary for the in vitro assembly process of the 50S ribosomal subunit. It is not involved in the protein synthesizing functions of that subunit. The chain is Large ribosomal subunit protein bL20c from Huperzia lucidula (Shining clubmoss).